We begin with the raw amino-acid sequence, 85 residues long: N.vectensis toxin 1 6 (85 aa).

An N-terminal signal peptide occupies residues 1–20; that stretch reads MASFKIVIVCLALLVAVACA. Positions 21-36 are excised as a propeptide; sequence RRRDMMSDDELDYHYS. Disulfide bonds link Cys42-Cys82, Cys44-Cys72, and Cys65-Cys83.

Belongs to the sea anemone sodium channel inhibitory toxin family. Type II subfamily. In terms of tissue distribution, expressed in ectodermal glands and in clumps outside of the extodermal layer. Is not expressed in nematocytes. In adult female tissues, shows similar expression levels in mesenteries (gametes-producing tissue), tentacles, pharynx and physa.

The protein resides in the secreted. Functionally, binds to site 3 of voltage-gated sodium channels and inhibits the inactivation process. Is highly active on DmNav1/TipE (drosophila) and is only extremely weakly active on rat Nav1.4-beta-1/SCN4A-SCN1B, and on human Nav1.5-beta-1/SCN5A-beta-1. This reveals high specificity for arthropod over mammalian channels. In vivo, when released into the medium, this recombinant toxin induces impaired swimming, paralysis and death of the crustacean A.nauplii within several hours. Also causes paralysis of cherry shrimps immediately after injection at very low doses. Its effect on zebrafish (D.rerio) larvae is also rapid, since it induces tail twitching accompanied by impaired swimming after 20 minutes and complete paralysis within 45 minutes. It has also been observed to cause death of zebrafish larvae within 1 hour. The chain is N.vectensis toxin 1 6 from Nematostella vectensis (Starlet sea anemone).